The primary structure comprises 283 residues: ATP phosphoribosyltransferase (283 aa).

Belongs to the ATP phosphoribosyltransferase family. Long subfamily. The cofactor is Mg(2+).

It localises to the cytoplasm. The catalysed reaction is 1-(5-phospho-beta-D-ribosyl)-ATP + diphosphate = 5-phospho-alpha-D-ribose 1-diphosphate + ATP. Its pathway is amino-acid biosynthesis; L-histidine biosynthesis; L-histidine from 5-phospho-alpha-D-ribose 1-diphosphate: step 1/9. With respect to regulation, feedback inhibited by histidine. Its function is as follows. Catalyzes the condensation of ATP and 5-phosphoribose 1-diphosphate to form N'-(5'-phosphoribosyl)-ATP (PR-ATP). Has a crucial role in the pathway because the rate of histidine biosynthesis seems to be controlled primarily by regulation of HisG enzymatic activity. In Rhodococcus opacus (strain B4), this protein is ATP phosphoribosyltransferase.